The chain runs to 428 residues: Exodeoxyribonuclease 7 large subunit (428 aa).

Belongs to the XseA family. In terms of assembly, heterooligomer composed of large and small subunits.

The protein localises to the cytoplasm. It catalyses the reaction Exonucleolytic cleavage in either 5'- to 3'- or 3'- to 5'-direction to yield nucleoside 5'-phosphates.. Functionally, bidirectionally degrades single-stranded DNA into large acid-insoluble oligonucleotides, which are then degraded further into small acid-soluble oligonucleotides. This Mycobacterium leprae (strain TN) protein is Exodeoxyribonuclease 7 large subunit.